We begin with the raw amino-acid sequence, 872 residues long: Protein translocase subunit SecA (872 aa).

ATP-binding positions include Gln-87, 105-109, and Asp-510; that span reads GEGKT. Zn(2+) is bound by residues Cys-847, Cys-849, Cys-858, and Cys-859.

The protein belongs to the SecA family. Monomer and homodimer. Part of the essential Sec protein translocation apparatus which comprises SecA, SecYEG and auxiliary proteins SecDF-YajC and YidC. Zn(2+) is required as a cofactor.

It is found in the cell inner membrane. The protein localises to the cytoplasm. The enzyme catalyses ATP + H2O + cellular proteinSide 1 = ADP + phosphate + cellular proteinSide 2.. Part of the Sec protein translocase complex. Interacts with the SecYEG preprotein conducting channel. Has a central role in coupling the hydrolysis of ATP to the transfer of proteins into and across the cell membrane, serving as an ATP-driven molecular motor driving the stepwise translocation of polypeptide chains across the membrane. The chain is Protein translocase subunit SecA from Aliarcobacter butzleri (strain RM4018) (Arcobacter butzleri).